A 115-amino-acid polypeptide reads, in one-letter code: MNIEVLKSKIHRVKVTQAELHYVGSITIDEALMEASNIIENEKVQIVNINNGERFETYVIKGEKNTGVICLNGPAARKVAVGDIVIVIAYASMDFEEAKKWKPTLIFPDANNRLI.

Ser25 serves as the catalytic Schiff-base intermediate with substrate; via pyruvic acid. The residue at position 25 (Ser25) is a Pyruvic acid (Ser). Thr57 provides a ligand contact to substrate. Tyr58 acts as the Proton donor in catalysis. 73–75 contacts substrate; sequence GPA.

Belongs to the PanD family. Heterooctamer of four alpha and four beta subunits. Pyruvate is required as a cofactor. Is synthesized initially as an inactive proenzyme, which is activated by self-cleavage at a specific serine bond to produce a beta-subunit with a hydroxyl group at its C-terminus and an alpha-subunit with a pyruvoyl group at its N-terminus.

The protein localises to the cytoplasm. It carries out the reaction L-aspartate + H(+) = beta-alanine + CO2. Its pathway is cofactor biosynthesis; (R)-pantothenate biosynthesis; beta-alanine from L-aspartate: step 1/1. Catalyzes the pyruvoyl-dependent decarboxylation of aspartate to produce beta-alanine. The polypeptide is Aspartate 1-decarboxylase (Cytophaga hutchinsonii (strain ATCC 33406 / DSM 1761 / CIP 103989 / NBRC 15051 / NCIMB 9469 / D465)).